A 134-amino-acid polypeptide reads, in one-letter code: Crustacean hyperglycemic hormones isoform B (134 aa).

The N-terminal stretch at 1 to 24 is a signal peptide; sequence MFACRTLCLVVVMVASLGTSGVGG. Residue Gln61 is modified to Pyrrolidone carboxylic acid. The residue at position 63 (Phe63) is a D-phenylalanine; in form CHH-B-II. Disulfide bonds link Cys67/Cys103, Cys83/Cys99, and Cys86/Cys112. At Val132 the chain carries Valine amide.

This sequence belongs to the arthropod CHH/MIH/GIH/VIH hormone family. Stereoinversion of L-Phe (form CHH-B-I) to D-Phe (form CHH-B-II). Produced by the medulla terminalis X-organ in the eyestalks and transported to the sinus gland where they are stored and released. Present also in the ventral nervous system.

The protein resides in the secreted. Its function is as follows. Hormone found in the sinus gland of isopods and decapods which controls the blood sugar level. Has a secretagogue action over the amylase released from the midgut gland. May act as a stress hormone and may be involved in the control of molting and reproduction. The polypeptide is Crustacean hyperglycemic hormones isoform B (Homarus americanus (American lobster)).